The primary structure comprises 554 residues: Phospho-2-dehydro-3-deoxyheptonate aldolase 1, chloroplastic (554 aa).

A chloroplast-targeting transit peptide spans 1–39; the sequence is MSLATSSSMAGGAAVVPRSATATTASAFVTMKRRATAVR. Residues 41–70 are disordered; that stretch reads VHAAEPSKNPPVGVPSAAKTSSPSVAAPEK.

This sequence belongs to the class-II DAHP synthase family.

Its subcellular location is the plastid. The protein resides in the chloroplast. It carries out the reaction D-erythrose 4-phosphate + phosphoenolpyruvate + H2O = 7-phospho-2-dehydro-3-deoxy-D-arabino-heptonate + phosphate. It functions in the pathway metabolic intermediate biosynthesis; chorismate biosynthesis; chorismate from D-erythrose 4-phosphate and phosphoenolpyruvate: step 1/7. The sequence is that of Phospho-2-dehydro-3-deoxyheptonate aldolase 1, chloroplastic (DAHPS1) from Oryza sativa subsp. japonica (Rice).